Consider the following 303-residue polypeptide: Propanal dehydrogenase (CoA-propanoylating) (303 aa).

12–15 (SGNI) contacts NAD(+). Residue C127 is the Acyl-thioester intermediate of the active site. NAD(+) is bound by residues 158-166 (SAGPGTRAN) and N277.

The protein belongs to the acetaldehyde dehydrogenase family. Monomer. Forms a heterotetramer composed of two aldolase (HsaF) and two dehydrogenase (HsaG) subunits.

The enzyme catalyses propanal + NAD(+) + CoA = propanoyl-CoA + NADH + H(+). The catalysed reaction is acetaldehyde + NAD(+) + CoA = acetyl-CoA + NADH + H(+). Functionally, involved in cholesterol degradation. Catalyzes the conversion of propanal to propanoyl-CoA, using NAD(+) and coenzyme A. This chain is Propanal dehydrogenase (CoA-propanoylating), found in Mycobacterium bovis (strain ATCC BAA-935 / AF2122/97).